We begin with the raw amino-acid sequence, 221 residues long: N-(5'-phosphoribosyl)anthranilate isomerase (221 aa).

Belongs to the TrpF family.

The enzyme catalyses N-(5-phospho-beta-D-ribosyl)anthranilate = 1-(2-carboxyphenylamino)-1-deoxy-D-ribulose 5-phosphate. It functions in the pathway amino-acid biosynthesis; L-tryptophan biosynthesis; L-tryptophan from chorismate: step 3/5. The polypeptide is N-(5'-phosphoribosyl)anthranilate isomerase (Chlorobaculum parvum (strain DSM 263 / NCIMB 8327) (Chlorobium vibrioforme subsp. thiosulfatophilum)).